The sequence spans 597 residues: Elongation factor 4 (597 aa).

One can recognise a tr-type G domain in the interval 2–184; sequence NNIRNFSIIA…ALIAKVPPPK (183 aa). Residues 14-19 and 131-134 contribute to the GTP site; these read DHGKST and NKID.

It belongs to the TRAFAC class translation factor GTPase superfamily. Classic translation factor GTPase family. LepA subfamily.

The protein resides in the cell inner membrane. It catalyses the reaction GTP + H2O = GDP + phosphate + H(+). Its function is as follows. Required for accurate and efficient protein synthesis under certain stress conditions. May act as a fidelity factor of the translation reaction, by catalyzing a one-codon backward translocation of tRNAs on improperly translocated ribosomes. Back-translocation proceeds from a post-translocation (POST) complex to a pre-translocation (PRE) complex, thus giving elongation factor G a second chance to translocate the tRNAs correctly. Binds to ribosomes in a GTP-dependent manner. The sequence is that of Elongation factor 4 from Herminiimonas arsenicoxydans.